The sequence spans 608 residues: 1-deoxy-D-xylulose-5-phosphate synthase (608 aa).

Thiamine diphosphate-binding positions include H66 and 107–109 (GHA). D138 is a Mg(2+) binding site. Thiamine diphosphate contacts are provided by residues 139 to 140 (GA), N167, F277, and E350. N167 is a Mg(2+) binding site.

Belongs to the transketolase family. DXPS subfamily. In terms of assembly, homodimer. Requires Mg(2+) as cofactor. The cofactor is thiamine diphosphate.

It catalyses the reaction D-glyceraldehyde 3-phosphate + pyruvate + H(+) = 1-deoxy-D-xylulose 5-phosphate + CO2. The protein operates within metabolic intermediate biosynthesis; 1-deoxy-D-xylulose 5-phosphate biosynthesis; 1-deoxy-D-xylulose 5-phosphate from D-glyceraldehyde 3-phosphate and pyruvate: step 1/1. Catalyzes the acyloin condensation reaction between C atoms 2 and 3 of pyruvate and glyceraldehyde 3-phosphate to yield 1-deoxy-D-xylulose-5-phosphate (DXP). This chain is 1-deoxy-D-xylulose-5-phosphate synthase, found in Thermotoga maritima (strain ATCC 43589 / DSM 3109 / JCM 10099 / NBRC 100826 / MSB8).